Here is a 466-residue protein sequence, read N- to C-terminus: Signal recognition particle 54 kDa protein (466 aa).

Residues 104 to 111, 184 to 188, and 242 to 245 contribute to the GTP site; these read GLQGSGKT, DTAGR, and TKLD. The disordered stretch occupies residues 446–466; it reads QQQGGGGMGGLGGGGGLGPFG. Over residues 448–466 the composition is skewed to gly residues; that stretch reads QGGGGMGGLGGGGGLGPFG.

Belongs to the GTP-binding SRP family. SRP54 subfamily. Part of the signal recognition particle protein translocation system, which is composed of SRP and FtsY. Archaeal SRP consists of a 7S RNA molecule of 300 nucleotides and two protein subunits: SRP54 and SRP19.

The protein resides in the cytoplasm. It catalyses the reaction GTP + H2O = GDP + phosphate + H(+). Functionally, involved in targeting and insertion of nascent membrane proteins into the cytoplasmic membrane. Binds to the hydrophobic signal sequence of the ribosome-nascent chain (RNC) as it emerges from the ribosomes. The SRP-RNC complex is then targeted to the cytoplasmic membrane where it interacts with the SRP receptor FtsY. This Haloquadratum walsbyi (strain DSM 16790 / HBSQ001) protein is Signal recognition particle 54 kDa protein.